Here is a 183-residue protein sequence, read N- to C-terminus: MARRGQQPPQQQQQAQPAQKNQAGKFNPAEFVKPGLTEEEVLEIKEAFDLFDTDGTQSIDPKELKAAMTSLGFEAKNQTIYQMISDLDTDGSGQIDFAEFLKLMTARISERDSKADIQKVFNLFDSERAGFITLKDLRKVAKELGETMDDSELQEMIDRADSDGDTQVTFEDFYNIMTKKTFA.

Residues 1-19 show a composition bias toward low complexity; the sequence is MARRGQQPPQQQQQAQPAQ. The disordered stretch occupies residues 1-30; that stretch reads MARRGQQPPQQQQQAQPAQKNQAGKFNPAE. 4 EF-hand domains span residues 39 to 74, 75 to 110, 112 to 147, and 148 to 183; these read EEVL…LGFE, AKNQ…RISE, DSKA…LGET, and MDDS…KTFA. Ca(2+) is bound by residues Asp-52, Asp-54, Thr-56, Ser-58, Glu-63, Asp-88, Asp-90, Ser-92, Gln-94, and Glu-99.

It belongs to the centrin family. Monomer.

The protein resides in the cytoplasm. The protein localises to the cytoskeleton. Plays a fundamental role in microtubule organizing center structure and function. Component of the infraciliary lattice (ICL) and the ciliary basal bodies. The sequence is that of Caltractin ICL1f (Icl1f) from Paramecium tetraurelia.